The sequence spans 351 residues: Lipoyl synthase (351 aa).

Over residues 1-10 (MNDSGNSSKV) the composition is skewed to polar residues. The interval 1–27 (MNDSGNSSKVNVRPPSAGLGAPSPGKR) is disordered. The segment covering 14 to 24 (PPSAGLGAPSP) has biased composition (low complexity). Positions 74, 79, 85, 100, 104, 107, and 311 each coordinate [4Fe-4S] cluster. Residues 86–300 (WEDREATFLI…KEQAKEIGFS (215 aa)) enclose the Radical SAM core domain.

Belongs to the radical SAM superfamily. Lipoyl synthase family. It depends on [4Fe-4S] cluster as a cofactor.

It is found in the cytoplasm. It carries out the reaction [[Fe-S] cluster scaffold protein carrying a second [4Fe-4S](2+) cluster] + N(6)-octanoyl-L-lysyl-[protein] + 2 oxidized [2Fe-2S]-[ferredoxin] + 2 S-adenosyl-L-methionine + 4 H(+) = [[Fe-S] cluster scaffold protein] + N(6)-[(R)-dihydrolipoyl]-L-lysyl-[protein] + 4 Fe(3+) + 2 hydrogen sulfide + 2 5'-deoxyadenosine + 2 L-methionine + 2 reduced [2Fe-2S]-[ferredoxin]. It participates in protein modification; protein lipoylation via endogenous pathway; protein N(6)-(lipoyl)lysine from octanoyl-[acyl-carrier-protein]: step 2/2. Functionally, catalyzes the radical-mediated insertion of two sulfur atoms into the C-6 and C-8 positions of the octanoyl moiety bound to the lipoyl domains of lipoate-dependent enzymes, thereby converting the octanoylated domains into lipoylated derivatives. In Tropheryma whipplei (strain TW08/27) (Whipple's bacillus), this protein is Lipoyl synthase.